The chain runs to 198 residues: Riboflavin synthase (198 aa).

2 Lumazine-binding repeats span residues 1-95 (MFSG…IGGH) and 96-188 (FVSG…VDTV). Residues 4 to 6 (GII), 46 to 48 (CLT), 60 to 65 (DVTEET), 99 to 101 (GHV), Lys-130, 139 to 141 (SLT), and 153 to 158 (SVIPET) contribute to the 2,4-dihydroxypteridine site.

As to quaternary structure, homotrimer.

It carries out the reaction 2 6,7-dimethyl-8-(1-D-ribityl)lumazine + H(+) = 5-amino-6-(D-ribitylamino)uracil + riboflavin. It functions in the pathway cofactor biosynthesis; riboflavin biosynthesis; riboflavin from 2-hydroxy-3-oxobutyl phosphate and 5-amino-6-(D-ribitylamino)uracil: step 2/2. Catalyzes the dismutation of two molecules of 6,7-dimethyl-8-ribityllumazine, resulting in the formation of riboflavin and 5-amino-6-(D-ribitylamino)uracil. The protein is Riboflavin synthase (ribE) of Chlamydia muridarum (strain MoPn / Nigg).